A 2137-amino-acid chain; its full sequence is Pecanex-like protein 2 (2137 aa).

2 helical membrane-spanning segments follow: residues 34-54 (CHLY…LAFP) and 57-77 (AIIV…IKLV). 4 disordered regions span residues 92–163 (QQKP…LELS), 225–251 (NGKG…VDKG), 402–530 (EKTS…HARV), and 545–572 (SAEI…QMPN). Over residues 96–114 (SRKEEKPNKDKEAKGEHIT) the composition is skewed to basic and acidic residues. Positions 116–125 (HRNPSNNRQI) are enriched in polar residues. Asn136 carries N-linked (GlcNAc...) asparagine glycosylation. Over residues 146 to 156 (SRGQSITSHHS) the composition is skewed to polar residues. An N-linked (GlcNAc...) asparagine glycan is attached at Asn449. Positions 479-490 (IKDHSSSSREPW) are enriched in basic and acidic residues. Over residues 510 to 520 (GQTNLDPSSCK) the composition is skewed to polar residues. Asn550, Asn572, Asn587, Asn598, and Asn613 each carry an N-linked (GlcNAc...) asparagine glycan. A compositionally biased stretch (polar residues) spans 593–602 (ASSQLNGSAE). Residues 593 to 612 (ASSQLNGSAEQNEESGLLRD) form a disordered region. Disordered stretches follow at residues 621–655 (EILE…CTQP) and 740–763 (AREM…SGDP). The span at 630–655 (GHSSKQGKPDLQSQDHTSTGPACTQP) shows a compositional bias: polar residues. Residues 746–760 (SSSSTTTSESQDPSS) are compositionally biased toward low complexity. 13 consecutive transmembrane segments (helical) span residues 844–864 (LAIL…SQGF), 868–888 (MWVL…LKSV), 901–921 (QIIT…ILLL), 952–972 (YLIV…FPQI), 983–1003 (IDML…VYSV), 1029–1049 (HIPA…YHLS), 1099–1119 (LIVC…TVFL), 1124–1144 (FLSI…HYVL), 1193–1213 (YILY…LISN), 1237–1257 (SFCN…FFHF), 1265–1285 (SFLL…DLLH), 1302–1322 (GSSF…MLFF), and 1324–1344 (TIAT…VIFI). N-linked (GlcNAc...) asparagine glycans are attached at residues Asn1412, Asn1553, and Asn1818. Residues 1876 to 1958 (RQHSGGNIED…RPPMLSSSGP (83 aa)) form a disordered region. Polar residues-rich tracts occupy residues 1901–1910 (SGGSQESSAE), 1920–1929 (GVSSCEGTQR), and 1937–1958 (SQSV…SSGP). N-linked (GlcNAc...) asparagine glycosylation is present at Asn2054.

The protein belongs to the pecanex family.

It is found in the membrane. In terms of biological role, may play a role in tumorigenesis of colorectal carcinomas with high microsatellite instability (MSI-H). In Homo sapiens (Human), this protein is Pecanex-like protein 2.